Reading from the N-terminus, the 152-residue chain is Large ribosomal subunit protein bL9 (152 aa).

This sequence belongs to the bacterial ribosomal protein bL9 family.

Its function is as follows. Binds to the 23S rRNA. This Mycobacterium leprae (strain Br4923) protein is Large ribosomal subunit protein bL9.